We begin with the raw amino-acid sequence, 168 residues long: Mediator of RNA polymerase II transcription subunit 31 (168 aa).

The segment covering 113 to 159 (EGEDQDVEESEEETVENEQKESEDEEDVVIVEKPEDEQEEQAEEAAE) has biased composition (acidic residues). Positions 113–168 (EGEDQDVEESEEETVENEQKESEDEEDVVIVEKPEDEQEEQAEEAAEPTDTSLLNT) are disordered.

The protein belongs to the Mediator complex subunit 31 family. In terms of assembly, component of the Mediator complex.

It is found in the nucleus. In terms of biological role, component of the Mediator complex, a coactivator involved in the regulated transcription of nearly all RNA polymerase II-dependent genes. Mediator functions as a bridge to convey information from gene-specific regulatory proteins to the basal RNA polymerase II transcription machinery. Mediator is recruited to promoters by direct interactions with regulatory proteins and serves as a scaffold for the assembly of a functional preinitiation complex with RNA polymerase II and the general transcription factors. The protein is Mediator of RNA polymerase II transcription subunit 31 (mdt-31) of Caenorhabditis briggsae.